Here is a 525-residue protein sequence, read N- to C-terminus: GMP synthase [glutamine-hydrolyzing] (525 aa).

In terms of domain architecture, Glutamine amidotransferase type-1 spans 9–207 (RILILDFGSQ…VRDICQCEAL (199 aa)). The Nucleophile role is filled by Cys86. Active-site residues include His181 and Glu183. A GMPS ATP-PPase domain is found at 208–400 (WTPAKIIDDA…LGLPYDMLYR (193 aa)). Residue 235 to 241 (SGGVDSS) participates in ATP binding.

As to quaternary structure, homodimer.

The enzyme catalyses XMP + L-glutamine + ATP + H2O = GMP + L-glutamate + AMP + diphosphate + 2 H(+). It participates in purine metabolism; GMP biosynthesis; GMP from XMP (L-Gln route): step 1/1. Functionally, catalyzes the synthesis of GMP from XMP. The polypeptide is GMP synthase [glutamine-hydrolyzing] (Citrobacter koseri (strain ATCC BAA-895 / CDC 4225-83 / SGSC4696)).